The following is a 395-amino-acid chain: S-adenosylmethionine synthase (395 aa).

ATP is bound at residue histidine 14. Aspartate 16 is a Mg(2+) binding site. Glutamate 42 lines the K(+) pocket. Residues glutamate 55 and glutamine 98 each contribute to the L-methionine site. Residues glutamine 98 to lysine 108 form a flexible loop region. ATP contacts are provided by residues aspartate 174–lysine 176, arginine 240–phenylalanine 241, aspartate 249, arginine 255–lysine 256, alanine 272, and lysine 276. Aspartate 249 is an L-methionine binding site. An L-methionine-binding site is contributed by lysine 280.

It belongs to the AdoMet synthase family. As to quaternary structure, homotetramer; dimer of dimers. The cofactor is Mg(2+). K(+) is required as a cofactor.

It localises to the cytoplasm. It carries out the reaction L-methionine + ATP + H2O = S-adenosyl-L-methionine + phosphate + diphosphate. Its pathway is amino-acid biosynthesis; S-adenosyl-L-methionine biosynthesis; S-adenosyl-L-methionine from L-methionine: step 1/1. Functionally, catalyzes the formation of S-adenosylmethionine (AdoMet) from methionine and ATP. The overall synthetic reaction is composed of two sequential steps, AdoMet formation and the subsequent tripolyphosphate hydrolysis which occurs prior to release of AdoMet from the enzyme. The polypeptide is S-adenosylmethionine synthase (Caldanaerobacter subterraneus subsp. tengcongensis (strain DSM 15242 / JCM 11007 / NBRC 100824 / MB4) (Thermoanaerobacter tengcongensis)).